The chain runs to 681 residues: Glutamine--fructose-6-phosphate aminotransferase [isomerizing] 1 (681 aa).

Cys-2 serves as the catalytic For GATase activity. Residues 2-287 (CGIFAYLNYH…DDDVAAVVDG (286 aa)) enclose the Glutamine amidotransferase type-2 domain. A phosphoserine mark is found at Ser-103 and Ser-243. The interval 295 to 662 (KRTARDHPGR…LQLLAFHLAV (368 aa)) is isomerase. SIS domains follow at residues 359–498 (HIKE…DRIS) and 530–671 (LATE…VDFP). Substrate is bound by residues 376-377 (TS), 421-423 (SQS), Thr-426, and His-577.

Homotetramer, may also exist as homodimers.

It carries out the reaction D-fructose 6-phosphate + L-glutamine = D-glucosamine 6-phosphate + L-glutamate. It functions in the pathway nucleotide-sugar biosynthesis; UDP-N-acetyl-alpha-D-glucosamine biosynthesis; alpha-D-glucosamine 6-phosphate from D-fructose 6-phosphate: step 1/1. Its activity is regulated as follows. Inhibited by 4,4'-dithiodipyridine. Functionally, controls the flux of glucose into the hexosamine pathway. Most likely involved in regulating the availability of precursors for N- and O-linked glycosylation of proteins. Regulates the circadian expression of clock genes BMAL1 and CRY1. Has a role in fine tuning the metabolic fluctuations of cytosolic UDP-GlcNAc and its effects on hyaluronan synthesis that occur during tissue remodeling. The chain is Glutamine--fructose-6-phosphate aminotransferase [isomerizing] 1 (Gfpt1) from Rattus norvegicus (Rat).